Here is a 305-residue protein sequence, read N- to C-terminus: DNA-directed RNA polymerase 35 kDa subunit (305 aa).

The protein belongs to the poxviridae DNA-directed RNA polymerase 35 kDa subunit family. As to quaternary structure, the DNA-dependent RNA polymerase used for intermediate and late genes expression consists of eight subunits 147 kDa, 133 kDa, 35 kDa, 30 kDa, 22 kDa, 19 kDa, 18 kDa and 7 kDa totalling more than 500 kDa in mass. The same holoenzyme, with the addition of the transcription-specificity factor RAP94, is used for early gene expression.

The protein resides in the virion. The enzyme catalyses RNA(n) + a ribonucleoside 5'-triphosphate = RNA(n+1) + diphosphate. Functionally, part of the DNA-dependent RNA polymerase which catalyzes the transcription of viral DNA into RNA using the four ribonucleoside triphosphates as substrates. Responsible for the transcription of early, intermediate and late genes. DNA-dependent RNA polymerase associates with the early transcription factor (ETF), itself composed of D6 and A7, thereby allowing the early genes transcription. Late transcription, and probably also intermediate transcription, require newly synthesized RNA polymerase. The protein is DNA-directed RNA polymerase 35 kDa subunit (OPG156) of Bos taurus (Bovine).